The following is a 540-amino-acid chain: Chaperonin GroEL (540 aa).

Residues 29 to 32 (TLGP), 86 to 90 (DGTTT), G413, 476 to 478 (NAA), and D492 contribute to the ATP site.

This sequence belongs to the chaperonin (HSP60) family. Forms a cylinder of 14 subunits composed of two heptameric rings stacked back-to-back. Interacts with the co-chaperonin GroES.

It localises to the cytoplasm. The catalysed reaction is ATP + H2O + a folded polypeptide = ADP + phosphate + an unfolded polypeptide.. Functionally, together with its co-chaperonin GroES, plays an essential role in assisting protein folding. The GroEL-GroES system forms a nano-cage that allows encapsulation of the non-native substrate proteins and provides a physical environment optimized to promote and accelerate protein folding. This chain is Chaperonin GroEL, found in Streptococcus pneumoniae (strain Hungary19A-6).